A 196-amino-acid polypeptide reads, in one-letter code: ATP synthase subunit b 2 (196 aa).

Residues 1-18 are compositionally biased toward low complexity; it reads MVVAQAGAPAHPPAAHGA. A disordered region spans residues 1 to 33; the sequence is MVVAQAGAPAHPPAAHGAEAGHGEAAGGEHGGF. The chain crosses the membrane as a helical span at residues 41–60; sequence FASQLIWLIVSFGALYFLMS.

Belongs to the ATPase B chain family. As to quaternary structure, F-type ATPases have 2 components, F(1) - the catalytic core - and F(0) - the membrane proton channel. F(1) has five subunits: alpha(3), beta(3), gamma(1), delta(1), epsilon(1). F(0) has three main subunits: a(1), b(2) and c(10-14). The alpha and beta chains form an alternating ring which encloses part of the gamma chain. F(1) is attached to F(0) by a central stalk formed by the gamma and epsilon chains, while a peripheral stalk is formed by the delta and b chains.

It is found in the cell inner membrane. Functionally, f(1)F(0) ATP synthase produces ATP from ADP in the presence of a proton or sodium gradient. F-type ATPases consist of two structural domains, F(1) containing the extramembraneous catalytic core and F(0) containing the membrane proton channel, linked together by a central stalk and a peripheral stalk. During catalysis, ATP synthesis in the catalytic domain of F(1) is coupled via a rotary mechanism of the central stalk subunits to proton translocation. Component of the F(0) channel, it forms part of the peripheral stalk, linking F(1) to F(0). The b'-subunit is a diverged and duplicated form of b found in plants and photosynthetic bacteria. This is ATP synthase subunit b 2 (atpF2) from Azorhizobium caulinodans (strain ATCC 43989 / DSM 5975 / JCM 20966 / LMG 6465 / NBRC 14845 / NCIMB 13405 / ORS 571).